Here is a 124-residue protein sequence, read N- to C-terminus: Small ribosomal subunit protein uS13c (124 aa).

The tract at residues 100–124 (GQRTRTNARTRKGKVKTAVAKKKGR) is disordered. Residues 101 to 124 (QRTRTNARTRKGKVKTAVAKKKGR) show a composition bias toward basic residues.

This sequence belongs to the universal ribosomal protein uS13 family. As to quaternary structure, part of the 30S ribosomal subunit.

The protein resides in the plastid. It localises to the chloroplast. Its function is as follows. Located at the top of the head of the 30S subunit, it contacts several helices of the 16S rRNA. This Emiliania huxleyi (Coccolithophore) protein is Small ribosomal subunit protein uS13c.